A 1456-amino-acid polypeptide reads, in one-letter code: Putative 1-phosphatidylinositol-3-phosphate 5-kinase FAB1D (1456 aa).

Over residues 1–19 the composition is skewed to low complexity; that stretch reads MTPSNSLSSSERSLSGECS. Disordered regions lie at residues 1–110, 533–592, 925–944, 967–987, 1003–1022, and 1137–1159; these read MTPS…EVDG, PVSV…NDIE, ENDNKVSDSGSNGGIDTPLV, VPEDNESQTLCSSSPDTTSPI, NGQEADKSIPVTGESLDDEV, and NNQDSKQTDRDVSRFSSESTNRL. Residues 43–57 show a composition bias toward basic and acidic residues; sequence ELTKEVKVDRLERKS. A compositionally biased stretch (acidic residues) spans 86–110; the sequence is REDDSDDVPVWEPPEPENPEDEVDG. Over residues 533–544 the composition is skewed to low complexity; that stretch reads PVSVDTDVSTTS. Over residues 973–987 the composition is skewed to polar residues; the sequence is SQTLCSSSPDTTSPI. One can recognise a PIPK domain in the interval 1115–1443; it reads NNEESKKPLS…RFRKFMKTHF (329 aa). Residues 1150–1159 are compositionally biased toward polar residues; it reads RFSSESTNRL.

In terms of assembly, component of the PI(3,5)P2 regulatory complex at least composed of ATG18, SAC/FIG4, FAB1 and VAC14. Mg(2+) is required as a cofactor. It depends on Mn(2+) as a cofactor.

It catalyses the reaction a 1,2-diacyl-sn-glycero-3-phospho-(1D-myo-inositol-3-phosphate) + ATP = a 1,2-diacyl-sn-glycero-3-phospho-(1D-myo-inositol-3,5-bisphosphate) + ADP + H(+). In terms of biological role, the PI(3,5)P2 regulatory complex regulates both the synthesis and turnover of phosphatidylinositol 3,5-bisphosphate (PtdIns(3,5)P2). Catalyzes the phosphorylation of phosphatidylinositol 3-phosphate on the fifth hydroxyl of the myo-inositol ring, to form phosphatidylinositol 3,5-bisphosphate. The chain is Putative 1-phosphatidylinositol-3-phosphate 5-kinase FAB1D (FAB1D) from Arabidopsis thaliana (Mouse-ear cress).